The sequence spans 197 residues: Large ribosomal subunit protein uL10 (197 aa).

The segment at 162-197 (GGASAPAAEEAPAAEEAAAEEVAAPAEAAEAATEEN) is disordered. Low complexity predominate over residues 163–197 (GASAPAAEEAPAAEEAAAEEVAAPAEAAEAATEEN).

It belongs to the universal ribosomal protein uL10 family. As to quaternary structure, part of the ribosomal stalk of the 50S ribosomal subunit. The N-terminus interacts with L11 and the large rRNA to form the base of the stalk. The C-terminus forms an elongated spine to which L12 dimers bind in a sequential fashion forming a multimeric L10(L12)X complex.

Forms part of the ribosomal stalk, playing a central role in the interaction of the ribosome with GTP-bound translation factors. This is Large ribosomal subunit protein uL10 from Paenarthrobacter aurescens (strain TC1).